The sequence spans 185 residues: MLNEIKAKTKERMLKTIQSFHDDIKGVRTGRASASLLDGIVVNIYGGHQKLNQVAGVSVIDNKTLSIKIWDINVVGEVKNAILNANLNLNPVVEGNTIRIALPDLTQETREKLVKLLHQFAENARIAIRNIRRDIMEETEKMKENKEISEDDFHGAKKEIQNITDNNIKKIDGELSIKEKDILNH.

This sequence belongs to the RRF family.

Its subcellular location is the cytoplasm. In terms of biological role, responsible for the release of ribosomes from messenger RNA at the termination of protein biosynthesis. May increase the efficiency of translation by recycling ribosomes from one round of translation to another. This is Ribosome-recycling factor from Wolbachia sp. subsp. Drosophila simulans (strain wRi).